A 347-amino-acid polypeptide reads, in one-letter code: S-adenosylmethionine:tRNA ribosyltransferase-isomerase (347 aa).

Belongs to the QueA family. In terms of assembly, monomer.

The protein localises to the cytoplasm. The enzyme catalyses 7-aminomethyl-7-carbaguanosine(34) in tRNA + S-adenosyl-L-methionine = epoxyqueuosine(34) in tRNA + adenine + L-methionine + 2 H(+). It functions in the pathway tRNA modification; tRNA-queuosine biosynthesis. In terms of biological role, transfers and isomerizes the ribose moiety from AdoMet to the 7-aminomethyl group of 7-deazaguanine (preQ1-tRNA) to give epoxyqueuosine (oQ-tRNA). The protein is S-adenosylmethionine:tRNA ribosyltransferase-isomerase of Pseudomonas aeruginosa (strain LESB58).